The following is an 88-amino-acid chain: Probable oxaloacetate decarboxylase gamma chain (88 aa).

Residues 13–35 (LMFSGMGFVIIFLLILIWAIGIV) form a helical membrane-spanning segment.

It belongs to the OadG family. In terms of assembly, heterotrimer of an alpha, a beta and a gamma subunit. The cofactor is Na(+).

It is found in the cell membrane. The catalysed reaction is oxaloacetate + 2 Na(+)(in) + H(+) = pyruvate + 2 Na(+)(out) + CO2. Its function is as follows. Catalyzes the decarboxylation of oxaloacetate coupled to Na(+) translocation. In Mannheimia succiniciproducens (strain KCTC 0769BP / MBEL55E), this protein is Probable oxaloacetate decarboxylase gamma chain.